Consider the following 905-residue polypeptide: MKTPTAAEIRELFQRYFEEHGHRRVASSSLVPQNDPTLLFTNAGMVQFKDVFTGRERRDYSRATTAQKCVRAGGKHNDLENVGFTARHHTFFEMMGNFSFGDYFKADAIAWAWELVTSPAWLGIAKDRLAATVFAGEGTLPWDEEAFELWKAQGVPVERIHKLGAKDNFWAMGDTGPCGPCSELHYFQGNDVPCAEEQAGRKCQGVACDCDRWLEIWNLVFMQFERGQDGGLTPLPKPSIDTGAGLERLAAVAQGKRSNYDTDLFRSIIHAVEGLSDKRYDAASDDGVSMRVIADHARATTFLVGDGVLPSNEGRGYVLRRIMRRAIRHGKRLGLERPFLAAVCGAVIDEMGAAYPETRENRAFIEKVAQQEEESFRRTLDKGLAILEGEMRKLVPDATHDGKPATPAPDRARPIIDGKVAFQLYDTFGFPLDLTRVIAAERGFDVDEQGFDRHMAEQRARSEWKGSGEQGVDDLHKQIAGELGEVKFLGYELPAARAQVKAILANGARVARAGKGDKVEIVTDATPFYGESGGQVGDVGHITGAGLEIRVDDAQRPVPGLVTHVGEVLRGEVAVGDAVELSVDDRRRDLVRANHSATHLLQLALREVLGEHVKQAGSVVAPDYLRFDFSHFQPVTEEELAAVERRVNELVRENAETETAVLKLEEARHAGAMMIFGEKYGDVVRVVRIGPSKELCGGTHVRRSGDIAFFKIGSEESIASGVRRLVAYTGARAVEVQQREAEELRRAAALLKAGALEVSQKIEQTQRRVKDLERALEEARSKAAAAQSGDLAALAKDVGGAKVLAARVEGDGKALRELADKLRDRLGKGVVALGAEQDGKAILLVAVTRDLTARLKAGDLVKEAAKLVGGSGGGKPDMAQAGGSDPAGLEKALEKVAELAARALA.

Positions 595, 599, 696, and 700 each coordinate Zn(2+).

Belongs to the class-II aminoacyl-tRNA synthetase family. Zn(2+) is required as a cofactor.

The protein localises to the cytoplasm. The catalysed reaction is tRNA(Ala) + L-alanine + ATP = L-alanyl-tRNA(Ala) + AMP + diphosphate. Catalyzes the attachment of alanine to tRNA(Ala) in a two-step reaction: alanine is first activated by ATP to form Ala-AMP and then transferred to the acceptor end of tRNA(Ala). Also edits incorrectly charged Ser-tRNA(Ala) and Gly-tRNA(Ala) via its editing domain. This chain is Alanine--tRNA ligase, found in Anaeromyxobacter dehalogenans (strain 2CP-C).